We begin with the raw amino-acid sequence, 305 residues long: MDSGSRVNVNIQGTRVLKNKLGKIPDIDISTDGKYLLSASTNDVLLVWDLHTSNKVAFFEAPSVWIMTCAFSPSTKSIAAGGLNNFCVVYDTSVPDADPVELVGHAGFVSCCKYVDDGHLLTGSGDKTCMFWDIEQAKAISVLKGHEMDIVSLDFLPSNPNLFVTGGCDKLAKLWDLRAAYCCATFPGNTSDINSISFFPSNADFVTGAEDGIARCFDIRASAEIFQYSSPSSSPINSVLFSKSGKLLFIAKDKTCEVWDSISSKTITSLTGHENRISSLALTSDGTMLATGSWDECVRLWSSSG.

WD repeat units lie at residues 19–49, 61–91, 104–133, 145–176, 188–218, 231–260, and 272–302; these read NKLG…LVWD, APSV…VVYD, GHAG…MFWD, GHEM…KLWD, GNTS…RCFD, PSSS…EVWD, and GHEN…RLWS.

Belongs to the WD repeat G protein beta family. As to quaternary structure, g proteins are composed of 3 units, alpha, beta and gamma. Binding of the beta-gamma subunit complex (git5-git11) to the alpha subunit (gpa2) facilitates interaction with GPCR git3.

The protein localises to the cell membrane. The protein resides in the cytoplasm. Its subcellular location is the nucleus. Its function is as follows. Beta subunit of the heterotrimeric guanine nucleotide-binding protein (G protein) involved in glucose-induced cAMP signaling. The beta-gamma subunits (git5-git11) promote binding of the alpha subunit gpa2 to GPCR git3, which senses extracellular glucose, to activate cAMP-PKA signaling and repress sexual development and gluconeogenesis. In Schizosaccharomyces pombe (strain 972 / ATCC 24843) (Fission yeast), this protein is Guanine nucleotide-binding protein subunit beta (git5).